A 353-amino-acid polypeptide reads, in one-letter code: N-formyl peptide receptor 3 (353 aa).

The Extracellular portion of the chain corresponds to 1-27 (METNFSIPLNETEEVLPEPAGHTVLWI). N-linked (GlcNAc...) asparagine glycans are attached at residues N4 and N10. The chain crosses the membrane as a helical span at residues 28-50 (FSLLVHGVTFVFGVLGNGLVIWV). Topologically, residues 51–61 (AGFRMTRTVNT) are cytoplasmic. The helical transmembrane segment at 62–83 (ICYLNLALADFSFSAILPFRMV) threads the bilayer. At 84 to 100 (SVAMREKWPFGSFLCKL) the chain is on the extracellular side. C98 and C176 are joined by a disulfide. A helical membrane pass occupies residues 101–121 (VHVMIDINLFVSVYLITIIAL). At 122–140 (DRCICVLHPAWAQNHRTMS) the chain is on the cytoplasmic side. Residues 141 to 162 (LAKRVMTGLWIFTIVLTLPNFI) form a helical membrane-spanning segment. At 163 to 205 (FWTTISTTNGDTYCIFNFAFWGDTAVERLNVFITMAKVFLILH) the chain is on the extracellular side. A helical membrane pass occupies residues 206-226 (FIIGFSVPMSIITVCYGIIAA). Topologically, residues 227–242 (KIHRNHMIKSSRPLRV) are cytoplasmic. A helical membrane pass occupies residues 243–266 (FAAVVASFFICWFPYELIGILMAV). Topologically, residues 267 to 286 (WLKEMLLNGKYKIILVLINP) are extracellular. Residues 287-306 (TSSLAFFNSCLNPILYVFMG) traverse the membrane as a helical segment. Topologically, residues 307 to 353 (RNFQERLIRSLPTSLERALTEVPDSAQTSNTDTTSASPPEETELQAM) are cytoplasmic. The segment at 327–353 (EVPDSAQTSNTDTTSASPPEETELQAM) is disordered. A compositionally biased stretch (polar residues) spans 331 to 343 (SAQTSNTDTTSAS).

Belongs to the G-protein coupled receptor 1 family. In terms of tissue distribution, detected in various tissues with highest expression in lung.

The protein resides in the cell membrane. In terms of biological role, low affinity receptor for N-formyl-methionyl peptides, which are powerful neutrophils chemotactic factors. Binding of FMLP to the receptor causes activation of neutrophils. This response is mediated via a G-protein that activates a phosphatidylinositol-calcium second messenger system. Acts as a receptor for humanin. This is N-formyl peptide receptor 3 (FPR3) from Homo sapiens (Human).